A 433-amino-acid chain; its full sequence is CinA-like protein (433 aa).

Belongs to the CinA family.

The polypeptide is CinA-like protein (Prochlorococcus marinus (strain MIT 9515)).